The following is a 108-amino-acid chain: Trp operon repressor homolog (108 aa).

A DNA-binding region spans residues 59-82 (QRQISQLLGVGVATITRGSNELKS).

The protein belongs to the TrpR family. Homodimer.

The protein resides in the cytoplasm. Its function is as follows. This protein is an aporepressor. When complexed with L-tryptophan it binds the operator region of the trp operon and prevents the initiation of transcription. The polypeptide is Trp operon repressor homolog (Aliivibrio fischeri (strain ATCC 700601 / ES114) (Vibrio fischeri)).